The following is a 550-amino-acid chain: CTP synthase (550 aa).

Residues 1–267 (MKTKFIFITG…DQKIAIMLRL (267 aa)) are amidoligase domain. S14 serves as a coordination point for CTP. Residue S14 participates in UTP binding. Residues 15 to 20 (SLGKGL) and D72 contribute to the ATP site. D72 and E141 together coordinate Mg(2+). Residues 148 to 150 (DIE), 188 to 193 (KTKPTQ), and K224 each bind CTP. UTP-binding positions include 188–193 (KTKPTQ) and K224. One can recognise a Glutamine amidotransferase type-1 domain in the interval 292–545 (TIGIVGKYVD…IKAAKKEAMG (254 aa)). G354 is an L-glutamine binding site. C381 functions as the Nucleophile; for glutamine hydrolysis in the catalytic mechanism. L-glutamine contacts are provided by residues 382–385 (LGMQ), E405, and R473. Active-site residues include H518 and E520.

This sequence belongs to the CTP synthase family. As to quaternary structure, homotetramer.

It catalyses the reaction UTP + L-glutamine + ATP + H2O = CTP + L-glutamate + ADP + phosphate + 2 H(+). The enzyme catalyses L-glutamine + H2O = L-glutamate + NH4(+). The catalysed reaction is UTP + NH4(+) + ATP = CTP + ADP + phosphate + 2 H(+). Its pathway is pyrimidine metabolism; CTP biosynthesis via de novo pathway; CTP from UDP: step 2/2. Allosterically activated by GTP, when glutamine is the substrate; GTP has no effect on the reaction when ammonia is the substrate. The allosteric effector GTP functions by stabilizing the protein conformation that binds the tetrahedral intermediate(s) formed during glutamine hydrolysis. Inhibited by the product CTP, via allosteric rather than competitive inhibition. Functionally, catalyzes the ATP-dependent amination of UTP to CTP with either L-glutamine or ammonia as the source of nitrogen. Regulates intracellular CTP levels through interactions with the four ribonucleotide triphosphates. The sequence is that of CTP synthase from Nitratidesulfovibrio vulgaris (strain DSM 19637 / Miyazaki F) (Desulfovibrio vulgaris).